Consider the following 214-residue polypeptide: MPIIAVIDYDMGNLHSACKGLQEAGTQTIVSDRPEDLVSADAVVLPGVGAFDPAMQHLRSRQLIPVIQDILASGKPFLGICLGLQILFEGSEEGTEAGLGIIPGTVKRFQSEPGITIPHMGWNQLEYQQPDLPLWRHSPAQPWVYFVHSYYVDPVDPTVKAATVTHGTQTITAAIARDNLMAVQFHPEKSSTFGLQILANFVEQVQATLATPAV.

The region spanning 3–211 (IIAVIDYDMG…VEQVQATLAT (209 aa)) is the Glutamine amidotransferase type-1 domain. C81 (nucleophile) is an active-site residue. Active-site residues include H186 and E188.

Heterodimer of HisH and HisF.

The protein resides in the cytoplasm. It catalyses the reaction 5-[(5-phospho-1-deoxy-D-ribulos-1-ylimino)methylamino]-1-(5-phospho-beta-D-ribosyl)imidazole-4-carboxamide + L-glutamine = D-erythro-1-(imidazol-4-yl)glycerol 3-phosphate + 5-amino-1-(5-phospho-beta-D-ribosyl)imidazole-4-carboxamide + L-glutamate + H(+). The enzyme catalyses L-glutamine + H2O = L-glutamate + NH4(+). It functions in the pathway amino-acid biosynthesis; L-histidine biosynthesis; L-histidine from 5-phospho-alpha-D-ribose 1-diphosphate: step 5/9. In terms of biological role, IGPS catalyzes the conversion of PRFAR and glutamine to IGP, AICAR and glutamate. The HisH subunit catalyzes the hydrolysis of glutamine to glutamate and ammonia as part of the synthesis of IGP and AICAR. The resulting ammonia molecule is channeled to the active site of HisF. The polypeptide is Imidazole glycerol phosphate synthase subunit HisH (Acaryochloris marina (strain MBIC 11017)).